Reading from the N-terminus, the 516-residue chain is MRPRQRFRRFHPRWSKVNLRGFGGVGALKGVKALNGMNVRVSMRLKWISNRIHRIRRSRRLGRLSISVRPNGSWQVYLLSSLPLRSLSRVWGQFNRAHLPTFLRTPGFKLYAWVFGCNLSELKDPDLTHYRNFQDFFCRELRPETRPVDPVSPVVSPVDGRIVCQGVVDNNRIQHVKGLSYSLEALLGGISSSNPLVVNFEDEITPDLIQKHEQFAEQHSISLNSNNRYRKADASAAVVDEHSDEEALLCAFTDHPHFYLNDSRNSLNYFCPFSAFEDISNSVRSSCGKRLSPSSNFDLNNLGGDDDLRSESSSDFESAPASILEHEPTNWDDWVQEADVTDIDSLPWHNIRPGNKLFYSVIYLAPGDYHRFHSPADWVIESRRHFSGELFSVSPFLARRLHNLFVLNERVALLGRYEHGFMSMIPVGATNVGSIVINCDPTLSTNRLVLRKKSLGTFQEAVYKNASPVLDGMPVSRGEQVGGFQLGSTVVLVFEAPADFEFSTYQGQYVRVGEAL.

A mitochondrion-targeting transit peptide spans 1–21 (MRPRQRFRRFHPRWSKVNLRG). The Mitochondrial matrix segment spans residues 22 to 33 (FGGVGALKGVKA). The chain crosses the membrane as a helical span at residues 34-52 (LNGMNVRVSMRLKWISNRI). Residues 53 to 516 (HRIRRSRRLG…GQYVRVGEAL (464 aa)) lie on the Mitochondrial intermembrane side of the membrane. Residues Asp-159, His-373, and Ser-488 each act as charge relay system; for autoendoproteolytic cleavage activity in the active site. Ser-488 acts as the Schiff-base intermediate with substrate; via pyruvic acid; for decarboxylase activity in catalysis. Ser-488 carries the post-translational modification Pyruvic acid (Ser); by autocatalysis.

It belongs to the phosphatidylserine decarboxylase family. PSD-B subfamily. Eukaryotic type I sub-subfamily. In terms of assembly, heterodimer of a large membrane-associated beta subunit and a small pyruvoyl-containing alpha subunit. Pyruvate is required as a cofactor. Post-translationally, is synthesized initially as an inactive proenzyme. Formation of the active enzyme involves a self-maturation process in which the active site pyruvoyl group is generated from an internal serine residue via an autocatalytic post-translational modification. Two non-identical subunits are generated from the proenzyme in this reaction, and the pyruvate is formed at the N-terminus of the alpha chain, which is derived from the carboxyl end of the proenzyme. The autoendoproteolytic cleavage occurs by a canonical serine protease mechanism, in which the side chain hydroxyl group of the serine supplies its oxygen atom to form the C-terminus of the beta chain, while the remainder of the serine residue undergoes an oxidative deamination to produce ammonia and the pyruvoyl prosthetic group on the alpha chain. During this reaction, the Ser that is part of the protease active site of the proenzyme becomes the pyruvoyl prosthetic group, which constitutes an essential element of the active site of the mature decarboxylase.

The protein localises to the mitochondrion. The protein resides in the mitochondrion inner membrane. Its subcellular location is the nucleus envelope. It is found in the lipid droplet. It localises to the endoplasmic reticulum membrane. It catalyses the reaction a 1,2-diacyl-sn-glycero-3-phospho-L-serine + H(+) = a 1,2-diacyl-sn-glycero-3-phosphoethanolamine + CO2. It participates in phospholipid metabolism; phosphatidylethanolamine biosynthesis; phosphatidylethanolamine from CDP-diacylglycerol: step 2/2. In terms of biological role, catalyzes the formation of phosphatidylethanolamine (PtdEtn) from phosphatidylserine (PtdSer). Plays a central role in phospholipid metabolism and in the interorganelle trafficking of phosphatidylserine. Together with psd1 and psd3, responsible for the majority of phosphatidylethanolamine synthesis. Plays a role in lipid droplet biogenesis at the endoplasmic reticulum membrane. This Schizosaccharomyces pombe (strain 972 / ATCC 24843) (Fission yeast) protein is Phosphatidylserine decarboxylase proenzyme 2, mitochondrial.